The following is a 67-amino-acid chain: Conotoxin AbVIM (67 aa).

A signal peptide spans 1-17 (VLIIAVLFLTACQLIAT). The propeptide occupies 18-40 (ASYARSERKHPDLRLSSRNSKLS). Disulfide bonds link C43-C57, C50-C61, and C56-C66.

It belongs to the conotoxin O1 superfamily. In terms of tissue distribution, expressed by the venom duct.

It localises to the secreted. This is Conotoxin AbVIM from Conus abbreviatus (Abbreviated cone).